Reading from the N-terminus, the 819-residue chain is Nuclear pore complex protein Nup93 (819 aa).

Thr-49 carries the phosphothreonine modification. Residues Ser-52, Ser-66, Ser-72, Ser-75, Ser-80, Ser-430, and Ser-767 each carry the phosphoserine modification.

This sequence belongs to the nucleoporin interacting component (NIC) family. As to quaternary structure, part of the nuclear pore complex (NPC). Component of the p62 complex, a complex composed of NUP62 and NUP54. Forms a complex with NUP35, NUP155, NUP205 and lamin B; the interaction with NUP35 is direct. Does not interact with TPR. Interacts with SMAD4 and IPO7; translocates SMAD4 to the nucleus through the NPC upon BMP7 stimulation resulting in activation of SMAD4 signaling.

It is found in the nucleus membrane. Its subcellular location is the nucleus. The protein resides in the nuclear pore complex. The protein localises to the nucleus envelope. Plays a role in the nuclear pore complex (NPC) assembly and/or maintenance. May anchor nucleoporins, but not NUP153 and TPR, to the NPC. During renal development, regulates podocyte migration and proliferation through SMAD4 signaling. The chain is Nuclear pore complex protein Nup93 (Nup93) from Rattus norvegicus (Rat).